A 165-amino-acid polypeptide reads, in one-letter code: Lipoprotein signal peptidase (165 aa).

Helical transmembrane passes span 10–30 (LKWL…KYWV), 42–62 (VLPG…GLFT), 71–91 (LFVW…YKLI), 105–125 (IGGA…VDFI), and 133–153 (HWPT…IVTI). Residues Asp123 and Asp141 contribute to the active site.

The protein belongs to the peptidase A8 family.

It localises to the cell inner membrane. It carries out the reaction Release of signal peptides from bacterial membrane prolipoproteins. Hydrolyzes -Xaa-Yaa-Zaa-|-(S,diacylglyceryl)Cys-, in which Xaa is hydrophobic (preferably Leu), and Yaa (Ala or Ser) and Zaa (Gly or Ala) have small, neutral side chains.. Its pathway is protein modification; lipoprotein biosynthesis (signal peptide cleavage). This protein specifically catalyzes the removal of signal peptides from prolipoproteins. This chain is Lipoprotein signal peptidase, found in Blochmanniella pennsylvanica (strain BPEN).